A 469-amino-acid chain; its full sequence is Ubiquitin carboxyl-terminal hydrolase MINDY-1 (469 aa).

A disordered region spans residues 1 to 105; sequence MEHHQPEHPA…RLQELPQSPR (105 aa). Basic and acidic residues predominate over residues 23–44; that stretch reads ENHKVLSEPKEHPQDKDAKEAD. The residue at position 103 (S103) is a Phosphoserine. Catalysis depends on C137, which acts as the Nucleophile. The active-site Proton acceptor is H319. The interval 388–428 is ubiquitin-binding domain (UBD); sequence QVDQDYLIALSLQQQQPPPQGTSGLSDLELAQQLQQEEYQQ. Positions 401-469 are disordered; that stretch reads QQQPPPQGTS…PKQESDCVLL (69 aa). Over residues 415–448 the composition is skewed to low complexity; the sequence is LELAQQLQQEEYQQHQAAQAAPARAPSPQGRGAA. At S441 the chain carries Phosphoserine. Over residues 453–469 the composition is skewed to basic and acidic residues; sequence AAERRQRPKQESDCVLL.

It belongs to the MINDY deubiquitinase family. FAM63 subfamily.

The catalysed reaction is Thiol-dependent hydrolysis of ester, thioester, amide, peptide and isopeptide bonds formed by the C-terminal Gly of ubiquitin (a 76-residue protein attached to proteins as an intracellular targeting signal).. Hydrolase that can specifically remove 'Lys-48'-linked conjugated ubiquitin from proteins. Has exodeubiquitinase activity and has a preference for long polyubiquitin chains. May play a regulatory role at the level of protein turnover. The polypeptide is Ubiquitin carboxyl-terminal hydrolase MINDY-1 (MINDY1) (Bos taurus (Bovine)).